The sequence spans 123 residues: Large ribosomal subunit protein uL29 (123 aa).

Belongs to the universal ribosomal protein uL29 family.

This chain is Large ribosomal subunit protein uL29 (RPL35), found in Babesia bovis.